A 57-amino-acid polypeptide reads, in one-letter code: uncharacterized protein (57 aa).

A helical membrane pass occupies residues 24–44; it reads LWVTLLLTMFFTAVEIIGGLI.

To cation A.eutrophus efflux system protein CzcD.

The protein localises to the cell membrane. This is an uncharacterized protein from Bacillus caldolyticus.